Here is a 353-residue protein sequence, read N- to C-terminus: 3-deoxy-D-manno-octulosonic acid transferase (353 aa).

Residue glutamate 31 is the Proton acceptor of the active site. CMP-binding positions include 211–212 (PR), 247–249 (FGI), and 273–276 (NLLE).

The protein belongs to the glycosyltransferase group 1 family. Glycosyltransferase 30 subfamily. Can form homodimer, homotrimer and homotetramer.

Its subcellular location is the cell inner membrane. It catalyses the reaction lipid IVA (E. coli) + CMP-3-deoxy-beta-D-manno-octulosonate = alpha-Kdo-(2-&gt;6)-lipid IVA (E. coli) + CMP + H(+). It functions in the pathway bacterial outer membrane biogenesis; LPS core biosynthesis. In terms of biological role, involved in lipopolysaccharide (LPS) biosynthesis. Catalyzes the transfer of a single 3-deoxy-D-manno-octulosonate (Kdo) residue from CMP-Kdo to lipid IV(A), the tetraacyldisaccharide-1,4'-bisphosphate precursor of lipid A. Is strictly monofunctional, i.e. is capable of adding only a single Kdo residue to the acceptor lipid. In Aquifex aeolicus (strain VF5), this protein is 3-deoxy-D-manno-octulosonic acid transferase (kdtA).